The following is a 90-amino-acid chain: Small ribosomal subunit protein bS16 (90 aa).

The protein belongs to the bacterial ribosomal protein bS16 family.

This chain is Small ribosomal subunit protein bS16, found in Lysinibacillus sphaericus (strain C3-41).